Here is a 590-residue protein sequence, read N- to C-terminus: Aspartate--tRNA(Asp/Asn) ligase (590 aa).

Residue Glu-182 participates in L-aspartate binding. Residues 206 to 209 form an aspartate region; the sequence is QLFK. Arg-228 serves as a coordination point for L-aspartate. Residues 228-230 and Gln-237 each bind ATP; that span reads RDE. L-aspartate is bound at residue His-454. An ATP-binding site is contributed by Glu-488. Arg-495 contacts L-aspartate. 540–543 provides a ligand contact to ATP; it reads GLDR.

The protein belongs to the class-II aminoacyl-tRNA synthetase family. Type 1 subfamily. Homodimer.

Its subcellular location is the cytoplasm. The enzyme catalyses tRNA(Asx) + L-aspartate + ATP = L-aspartyl-tRNA(Asx) + AMP + diphosphate. Functionally, aspartyl-tRNA synthetase with relaxed tRNA specificity since it is able to aspartylate not only its cognate tRNA(Asp) but also tRNA(Asn). Reaction proceeds in two steps: L-aspartate is first activated by ATP to form Asp-AMP and then transferred to the acceptor end of tRNA(Asp/Asn). This is Aspartate--tRNA(Asp/Asn) ligase from Halothermothrix orenii (strain H 168 / OCM 544 / DSM 9562).